Consider the following 251-residue polypeptide: Octanoyltransferase (251 aa).

The BPL/LPL catalytic domain occupies 56–241; that stretch reads ADTGDEIWVV…NLDGASAAAD (186 aa). Substrate is bound by residues 96 to 103, 168 to 170, and 181 to 183; these read RGGQITYH, ALG, and GLS. The Acyl-thioester intermediate role is filled by C199.

This sequence belongs to the LipB family.

It is found in the cytoplasm. The catalysed reaction is octanoyl-[ACP] + L-lysyl-[protein] = N(6)-octanoyl-L-lysyl-[protein] + holo-[ACP] + H(+). The protein operates within protein modification; protein lipoylation via endogenous pathway; protein N(6)-(lipoyl)lysine from octanoyl-[acyl-carrier-protein]: step 1/2. Its function is as follows. Catalyzes the transfer of endogenously produced octanoic acid from octanoyl-acyl-carrier-protein onto the lipoyl domains of lipoate-dependent enzymes. Lipoyl-ACP can also act as a substrate although octanoyl-ACP is likely to be the physiological substrate. The polypeptide is Octanoyltransferase (Burkholderia cenocepacia (strain HI2424)).